We begin with the raw amino-acid sequence, 481 residues long: MIQVLLVTICLAVFPYQGSSIILESGNVDDYEVVYPQKVTALPKGAVQPKYEDAMQYEFKVNGEPVVLHLEKNKGLFSEDYSETHYSPDGREITTYPSVEDHCYHHGRVHNDADSTASISACDGLKGHFKLQGEMYLIEPLELSDSEAHAVFKYENVEKEDEAPKMCGVTQNWESDESIKKASQLYLTPEQQRFPQRHIELAIVVDHGMYTKYSSNFKKIRKRVHQMVSNINEMCRPLNIAITLSLLDVWSEKDLITVQADAPTTAGLFGDWRERVLLKKKNHDHAQLLTDINFTGDTIGWAYVGGMCNAKYSVGTVKDHSSNVFVVAVTMTHEIGHNLGMEHDDKDKCKCEACIMAPVISDKQSKLFSDCSKDYYQTFLTNKKPQCILNAPLRTDTVSTPISGNEFLEAGEECDCGSPSNPCCDVGTCKLSPGAQCADGLCCDQCRFKKKGKICRRARGDNPDDRCTGQSADCPRNGLYG.

A signal peptide spans 1–20 (MIQVLLVTICLAVFPYQGSS). Positions 21–190 (IILESGNVDD…KASQLYLTPE (170 aa)) are excised as a propeptide. The 196-residue stretch at 197-392 (RHIELAIVVD…KKPQCILNAP (196 aa)) folds into the Peptidase M12B domain. Positions 200 and 284 each coordinate Ca(2+). Intrachain disulfides connect C308–C387, C349–C371, and C351–C354. H333 provides a ligand contact to Zn(2+). Residue E334 is part of the active site. Zn(2+) contacts are provided by H337 and H343. Ca(2+) is bound by residues C387 and N390. Residues 393 to 410 (LRTDTVSTPISGNEFLEA) constitute a propeptide that is removed on maturation. Residues 400-481 (TPISGNEFLE…ADCPRNGLYG (82 aa)) form the Disintegrin domain. Intrachain disulfides connect C414-C429, C416-C424, C423-C446, C437-C443, C442-C467, and C455-C474. Residues 459–461 (RGD) carry the Cell attachment site motif.

This sequence belongs to the venom metalloproteinase (M12B) family. P-II subfamily. P-IIa sub-subfamily. Monomer. Requires Zn(2+) as cofactor. In terms of tissue distribution, expressed by the venom gland.

The protein resides in the secreted. Its function is as follows. Impairs hemostasis in the envenomed animal. In terms of biological role, inhibits platelet aggregation induced by ADP and collagen. Acts by inhibiting fibrinogen interaction with platelet receptors GPIIb/GPIIIa (ITGA2B/ITGB3). Has antitumor-growth activity. This Protobothrops jerdonii (Jerdon's pitviper) protein is Zinc metalloproteinase/disintegrin.